A 232-amino-acid polypeptide reads, in one-letter code: Ribonuclease 3 (232 aa).

Positions 10–135 (ALKIYEATGY…LIGAMYMDGG (126 aa)) constitute an RNase III domain. Glutamate 48 serves as a coordination point for Mg(2+). Aspartate 52 is a catalytic residue. 2 residues coordinate Mg(2+): asparagine 121 and glutamate 124. Glutamate 124 is a catalytic residue. The region spanning 161-230 (DPKTALQEWV…AKLMLKKITE (70 aa)) is the DRBM domain.

It belongs to the ribonuclease III family. In terms of assembly, homodimer. Requires Mg(2+) as cofactor.

It is found in the cytoplasm. The enzyme catalyses Endonucleolytic cleavage to 5'-phosphomonoester.. Its function is as follows. Digests double-stranded RNA. Involved in the processing of primary rRNA transcript to yield the immediate precursors to the large and small rRNAs (23S and 16S). Processes some mRNAs, and tRNAs when they are encoded in the rRNA operon. Processes pre-crRNA and tracrRNA of type II CRISPR loci if present in the organism. This chain is Ribonuclease 3, found in Anaplasma marginale (strain St. Maries).